Consider the following 415-residue polypeptide: Small ribosomal subunit protein uS5m (415 aa).

Positions 1–31 are disordered; that stretch reads MRRSGPELWKTLTSVSKSGQKKGRRNTRQPV. The S5 DRBM domain maps to 131 to 197; that stretch reads FETYCLEVKR…GMASRKIFHV (67 aa). The interval 396-415 is disordered; the sequence is GVEPMPLGIGLSHVVPKKDD.

Belongs to the universal ribosomal protein uS5 family. Component of the mitochondrial ribosome small subunit (28S) which comprises a 12S rRNA and about 30 distinct proteins.

Its subcellular location is the mitochondrion. This is Small ribosomal subunit protein uS5m (mrps-5) from Caenorhabditis briggsae.